A 309-amino-acid polypeptide reads, in one-letter code: NADH-quinone oxidoreductase subunit C (309 aa).

The interval 198-309 is disordered; that stretch reads LPGDEKAVPP…RTRKKKEDGE (112 aa). The span at 220–230 shows a compositional bias: basic and acidic residues; that stretch reads TKGDAKADVPK. Low complexity predominate over residues 246 to 261; sequence DAAAKPVAEAAAPAAT.

The protein belongs to the complex I 30 kDa subunit family. As to quaternary structure, NDH-1 is composed of 14 different subunits. Subunits NuoB, C, D, E, F, and G constitute the peripheral sector of the complex.

The protein resides in the cell inner membrane. The enzyme catalyses a quinone + NADH + 5 H(+)(in) = a quinol + NAD(+) + 4 H(+)(out). In terms of biological role, NDH-1 shuttles electrons from NADH, via FMN and iron-sulfur (Fe-S) centers, to quinones in the respiratory chain. The immediate electron acceptor for the enzyme in this species is believed to be ubiquinone. Couples the redox reaction to proton translocation (for every two electrons transferred, four hydrogen ions are translocated across the cytoplasmic membrane), and thus conserves the redox energy in a proton gradient. The protein is NADH-quinone oxidoreductase subunit C of Novosphingobium aromaticivorans (strain ATCC 700278 / DSM 12444 / CCUG 56034 / CIP 105152 / NBRC 16084 / F199).